We begin with the raw amino-acid sequence, 624 residues long: Membrane protein insertase YidC (624 aa).

A helical transmembrane segment spans residues 8–28 (MIIAIALSLAVLLGWNYFVTA). The segment at 36–95 (QQQAAQVNPSQGVNPSQGVDPSQGVNASPSPKEGGPSAPVPGTLPGAAGGSPQAALARDE) is disordered. Over residues 43-64 (NPSQGVNPSQGVDPSQGVNASP) the composition is skewed to polar residues. A run of 5 helical transmembrane segments spans residues 370–390 (FDLL…FKAL), 396–416 (LFGN…LFFL), 470–490 (WPVL…FVTI), 526–542 (LLHL…TMFL), and 559–579 (FTFM…GLVI).

This sequence belongs to the OXA1/ALB3/YidC family. Type 1 subfamily. In terms of assembly, interacts with the Sec translocase complex via SecD. Specifically interacts with transmembrane segments of nascent integral membrane proteins during membrane integration.

The protein localises to the cell inner membrane. Required for the insertion and/or proper folding and/or complex formation of integral membrane proteins into the membrane. Involved in integration of membrane proteins that insert both dependently and independently of the Sec translocase complex, as well as at least some lipoproteins. Aids folding of multispanning membrane proteins. This chain is Membrane protein insertase YidC, found in Methylobacterium sp. (strain 4-46).